Here is a 380-residue protein sequence, read N- to C-terminus: Cytochrome b (380 aa).

4 helical membrane passes run F34–A54, W78–I99, W114–L134, and F179–T199. Residues H84 and H98 each contribute to the heme b site. H183 and H197 together coordinate heme b. Residue H202 coordinates a ubiquinone. Transmembrane regions (helical) follow at residues I227–S247, L289–H309, L321–S341, and F348–P368.

This sequence belongs to the cytochrome b family. As to quaternary structure, the cytochrome bc1 complex contains 11 subunits: 3 respiratory subunits (MT-CYB, CYC1 and UQCRFS1), 2 core proteins (UQCRC1 and UQCRC2) and 6 low-molecular weight proteins (UQCRH/QCR6, UQCRB/QCR7, UQCRQ/QCR8, UQCR10/QCR9, UQCR11/QCR10 and a cleavage product of UQCRFS1). This cytochrome bc1 complex then forms a dimer. It depends on heme b as a cofactor.

It localises to the mitochondrion inner membrane. Functionally, component of the ubiquinol-cytochrome c reductase complex (complex III or cytochrome b-c1 complex) that is part of the mitochondrial respiratory chain. The b-c1 complex mediates electron transfer from ubiquinol to cytochrome c. Contributes to the generation of a proton gradient across the mitochondrial membrane that is then used for ATP synthesis. The chain is Cytochrome b (MT-CYB) from Paradisaea rubra (Red bird of paradise).